The sequence spans 670 residues: Protein phosphatase 1 regulatory subunit 15A (670 aa).

At 1–21 (MAPGQMPHQPAPWRGTHPLFL) the chain is on the cytoplasmic side. The tract at residues 1–60 (MAPGQMPHQPAPWRGTHPLFLLSPLMGLLSRAWSLLRAPGPPEPWLVEAVTEADQGGAGL) is required for localization in the endoplasmic reticulum. Positions 22–39 (LSPLMGLLSRAWSLLRAP) form an intramembrane region, helical. The Cytoplasmic portion of the chain corresponds to 40 to 670 (GPPEPWLVEA…PSLDLSGRRG (631 aa)). Disordered regions lie at residues 76-144 (GRHP…GQPA), 159-178 (PGEE…NEVT), and 191-501 (PGEE…EKWG). The segment covering 78–87 (HPQEETKDSG) has biased composition (basic and acidic residues). Over residues 191 to 202 (PGEEEEEEEENG) the composition is skewed to acidic residues. Basic and acidic residues predominate over residues 254–265 (KDKQAEKGDADP). Polar residues predominate over residues 271–288 (SLAQRPSLRTWQHPSSAI). Residues 289 to 299 (TEEEEDRDSEE) show a composition bias toward acidic residues. The segment covering 302-312 (ASSSVPLTSAF) has biased composition (polar residues). Acidic residues-rich tracts occupy residues 321-344 (EDTE…EGEA) and 367-385 (DTEE…EGEA). Repeat copies occupy residues 355–381 (AFLS…ATED), 396–426 (AFLS…GEAE), 436–462 (AFLS…DNES), and 478–511 (ALLR…FRVA). Residues 355-511 (AFLSAWVYRP…EAESCPFRVA (157 aa)) are 4 X 34 AA approximate repeats. An interaction with SMAD7 region spans residues 355–511 (AFLSAWVYRP…EAESCPFRVA (157 aa)). Residues 388–397 (SSATPPTSAF) are compositionally biased toward polar residues. The residue at position 403 (tyrosine 403) is a Phosphotyrosine. Residues 407 to 425 (DTEEEEDCDSEATEDEGEA) are compositionally biased toward acidic residues. Phosphotyrosine is present on tyrosine 443. A compositionally biased stretch (acidic residues) spans 448 to 461 (DTEEEDEYEDEDNE). Positions 484–556 (IYQPGEKTDG…DLERLLKTRK (73 aa)) are interaction with KMT2A/MLL1. Basic and acidic residues predominate over residues 489 to 501 (EKTDGGEAAEKWG). A Phosphotyrosine modification is found at tyrosine 513. The interaction with SMARCB1 stretch occupies residues 537-584 (KSAQTPTRHQDLERLLKTRKVRFSEKVSIHPLVVWAGPAQAARRGPWE). Residues 622 to 670 (NPPTSLATVPAPTQTSPMTPIQATPLSHALASPSPPCVSPSLDLSGRRG) are disordered. Polar residues predominate over residues 623–645 (PPTSLATVPAPTQTSPMTPIQAT).

The protein belongs to the PPP1R15 family. As to quaternary structure, interacts with PPP1CA. Interacts with EIF2S1. Interacts with PCNA. Interacts with LYN and KMT2A/MLL1. Interacts with PPP1R1A and SMARCB1. Interacts with SMAD7. Interacts with BAG1. Interacts with NOX4. Post-translationally, phosphorylated on tyrosine by LYN; which impairs its antiproliferative activity. In terms of processing, polyubiquitinated. Exhibits a rapid proteasomal degradation with a half-life under 1 hour, ubiquitination depends on endoplasmic reticulum association.

It is found in the endoplasmic reticulum membrane. It localises to the mitochondrion outer membrane. Its function is as follows. Recruits the serine/threonine-protein phosphatase PPP1CA to prevents excessive phosphorylation of the translation initiation factor eIF-2A/EIF2S1, thereby reversing the shut-off of protein synthesis initiated by stress-inducible kinases and facilitating recovery of cells from stress. Down-regulates the TGF-beta signaling pathway by promoting dephosphorylation of TGFB1 by PP1. May promote apoptosis by inducing TP53 phosphorylation on 'Ser-15'. Plays an essential role in autophagy by tuning translation during starvation, thus enabling lysosomal biogenesis and a sustained autophagic flux. The chain is Protein phosphatase 1 regulatory subunit 15A (PPP1R15A) from Bos taurus (Bovine).